The following is a 340-amino-acid chain: HTH-type transcriptional repressor PurR (340 aa).

An HTH lacI-type domain is found at 2 to 56 (ATIKDVAKLVGVSTTTVSHVINKTRFVAEDTTKAVWEAIASLNYSPSAVARSLKV). The H-T-H motif DNA-binding region spans 4–23 (IKDVAKLVGVSTTTVSHVIN). The DNA-binding element occupies 48–56 (SAVARSLKV). Hypoxanthine contacts are provided by Tyr73, Lys188, Thr190, Phe219, and Asp273.

In terms of assembly, homodimer.

Its pathway is purine metabolism; purine nucleotide biosynthesis [regulation]. In terms of biological role, is the main repressor of the genes involved in the de novo synthesis of purine nucleotides, regulating purB, purC, purEK, purF, purHD, purL, purMN and guaBA expression. PurR is allosterically activated to bind its cognate DNA by binding the purine corepressors, hypoxanthine or guanine, thereby effecting transcription repression. This is HTH-type transcriptional repressor PurR from Glaesserella parasuis serovar 5 (strain SH0165) (Haemophilus parasuis).